A 1508-amino-acid polypeptide reads, in one-letter code: DNA-directed RNA polymerase subunit beta' (1508 aa).

Zn(2+)-binding residues include C71, C73, C86, and C89. The Mg(2+) site is built by D470, D472, and D474. 4 residues coordinate Zn(2+): C804, C878, C885, and C888.

It belongs to the RNA polymerase beta' chain family. In terms of assembly, the RNAP catalytic core consists of 2 alpha, 1 beta, 1 beta' and 1 omega subunit. When a sigma factor is associated with the core the holoenzyme is formed, which can initiate transcription. Requires Mg(2+) as cofactor. Zn(2+) serves as cofactor.

It carries out the reaction RNA(n) + a ribonucleoside 5'-triphosphate = RNA(n+1) + diphosphate. Its function is as follows. DNA-dependent RNA polymerase catalyzes the transcription of DNA into RNA using the four ribonucleoside triphosphates as substrates. In Campylobacter fetus subsp. fetus (strain 82-40), this protein is DNA-directed RNA polymerase subunit beta'.